A 472-amino-acid polypeptide reads, in one-letter code: 3-isopropylmalate dehydratase large subunit (472 aa).

[4Fe-4S] cluster is bound by residues C353, C414, and C417.

The protein belongs to the aconitase/IPM isomerase family. LeuC type 1 subfamily. Heterodimer of LeuC and LeuD. Requires [4Fe-4S] cluster as cofactor.

The catalysed reaction is (2R,3S)-3-isopropylmalate = (2S)-2-isopropylmalate. It functions in the pathway amino-acid biosynthesis; L-leucine biosynthesis; L-leucine from 3-methyl-2-oxobutanoate: step 2/4. Functionally, catalyzes the isomerization between 2-isopropylmalate and 3-isopropylmalate, via the formation of 2-isopropylmaleate. The protein is 3-isopropylmalate dehydratase large subunit of Acinetobacter baumannii (strain ATCC 17978 / DSM 105126 / CIP 53.77 / LMG 1025 / NCDC KC755 / 5377).